Here is a 280-residue protein sequence, read N- to C-terminus: Cell envelope integrity protein EipB (280 aa).

A signal peptide spans 1–24 (MRFVRIAAAASGATVFMWAGFAGA). Cysteines 69 and 278 form a disulfide.

As to quaternary structure, monomer.

The protein resides in the periplasm. Functionally, functions in the periplasm to maintain cell envelope integrity. The polypeptide is Cell envelope integrity protein EipB (Brucella abortus (strain 2308)).